A 329-amino-acid chain; its full sequence is Quinate dehydrogenase (329 aa).

It carries out the reaction L-quinate + NAD(+) = 3-dehydroquinate + NADH + H(+). The protein operates within aromatic compound metabolism; 3,4-dihydroxybenzoate biosynthesis; 3-dehydroquinate from D-quinate (NAD(+) route): step 1/1. This chain is Quinate dehydrogenase (qutB), found in Emericella nidulans (strain FGSC A4 / ATCC 38163 / CBS 112.46 / NRRL 194 / M139) (Aspergillus nidulans).